The chain runs to 104 residues: Large ribosomal subunit protein bL21 (104 aa).

It belongs to the bacterial ribosomal protein bL21 family. Part of the 50S ribosomal subunit. Contacts protein L20.

In terms of biological role, this protein binds to 23S rRNA in the presence of protein L20. The chain is Large ribosomal subunit protein bL21 from Pseudomonas putida (strain GB-1).